The chain runs to 328 residues: Cytochrome c biogenesis protein CcsA (328 aa).

Transmembrane regions (helical) follow at residues 13–33 (ISFSVVSIVLTIYFFTLLVNL), 46–66 (GIVITFFGITGLLFTRWIYSG), 73–93 (LYESLIFLSWAFSIIHMVSYF), 101–121 (LNAITAPSAIFIQGFATSGLL), 146–166 (MILGYGALLCGSLLSIALLVI), 234–254 (IISLGFIFLTVGILSGAVWAN), 263–283 (WDPKETWAFITWTIFAIYLHI), and 295–315 (AIVASIGFLLIWICYFGVNLL).

It belongs to the CcmF/CycK/Ccl1/NrfE/CcsA family. As to quaternary structure, may interact with Ccs1.

Its subcellular location is the plastid. The protein resides in the chloroplast thylakoid membrane. In terms of biological role, required during biogenesis of c-type cytochromes (cytochrome c6 and cytochrome f) at the step of heme attachment. The chain is Cytochrome c biogenesis protein CcsA from Barbarea verna (Land cress).